The sequence spans 450 residues: Transcription factor AP-2 gamma (450 aa).

K10 participates in a covalent cross-link: Glycyl lysine isopeptide (Lys-Gly) (interchain with G-Cter in SUMO). Disordered stretches follow at residues 13-63 (EDCE…FPPP) and 90-126 (LHQPAPTGSQQQAWPGRQSQEGAGLPSHHGRPAGLLP). The PPxY motif motif lies at 59-64 (YFPPPY). Polar residues predominate over residues 95-110 (PTGSQQQAWPGRQSQE). S252 bears the Phosphoserine; by PKA mark. Residues 293–424 (RRKAAHVTLL…YIKEALIVID (132 aa)) form an H-S-H (helix-span-helix), dimerization region. The disordered stretch occupies residues 431 to 450 (GDQSPADSNKTLEKMEKHRK). A Phosphoserine modification is found at S434. Over residues 440–450 (KTLEKMEKHRK) the composition is skewed to basic and acidic residues.

Belongs to the AP-2 family. As to quaternary structure, binds DNA as a dimer. Can form homodimers or heterodimers with other AP-2 family members. Interacts with WWOX. Interacts with UBE2I. Interacts with KCTD1; this interaction represses transcription activation. Interacts with CITED2 (via C-terminus); the interaction stimulates TFAP2B-transcriptional activity. Interacts with CITED4. Interacts with MTA1. In terms of processing, sumoylated on Lys-10; which inhibits transcriptional activity.

It is found in the nucleus. Sequence-specific DNA-binding transcription factor that interacts with cellular enhancer elements to regulate transcription of selected genes, and which plays a key role in early embryonic development. AP-2 factors bind to the consensus sequence 5'-GCCNNNGGC-3' and activate genes involved in a large spectrum of important biological functions. TFAP2C plays a key role in early embryonic development by regulating both inner cell mass (ICM) and trophectoderm differentiation. At the 8-cell stage, during morula development, controls expression of cell-polarity genes. Upon trophoblast commitment, binds to late trophectoderm genes in blastocysts together with CDX2, and later to extra-embryonic ectoderm genes together with SOX2. Binds to both closed and open chromatin with other transcription factors. Involved in the MTA1-mediated epigenetic regulation of ESR1 expression in breast cancer. In Homo sapiens (Human), this protein is Transcription factor AP-2 gamma (TFAP2C).